A 526-amino-acid polypeptide reads, in one-letter code: Dolichyl pyrophosphate Glc1Man9GlcNAc2 alpha-1,3-glucosyltransferase (526 aa).

A run of 11 helical transmembrane segments spans residues 4–24, 103–122, 143–163, 188–208, 238–258, 334–354, 368–388, 389–409, 427–449, 461–481, and 488–508; these read FGIATGGSNWFSALALGVTLL, LLFQRFSVIFTDALFVYAVH, FILSALLLWNFGLLIVDHIHF, GAFLFAVLLHFKHIYLYVAPA, LISLGLIVFLVSALSLGPFLA, PLATFICTLIAMLPSVFCLWC, LCALSSFMFGWHVHEKAILLA, VLPMSLLSVGKAVDASIFLIL, LPIKIILMLLFTIYSISSLKTLF, TFYLLGLGPLEVFCEFVFPFT, and PFIPLLLTSVYCAVGITYAWL.

It belongs to the ALG6/ALG8 glucosyltransferase family.

The protein resides in the endoplasmic reticulum membrane. It catalyses the reaction an alpha-D-Glc-(1-&gt;3)-alpha-D-Man-(1-&gt;2)-alpha-D-Man-(1-&gt;2)-alpha-D-Man-(1-&gt;3)-[alpha-D-Man-(1-&gt;2)-alpha-D-Man-(1-&gt;3)-[alpha-D-Man-(1-&gt;2)-alpha-D-Man-(1-&gt;6)]-alpha-D-Man-(1-&gt;6)]-beta-D-Man-(1-&gt;4)-beta-D-GlcNAc-(1-&gt;4)-alpha-D-GlcNAc-diphospho-di-trans,poly-cis-dolichol + a di-trans,poly-cis-dolichyl beta-D-glucosyl phosphate = an alpha-D-Glc-(1-&gt;3)-alpha-D-Glc-(1-&gt;3)-alpha-D-Man-(1-&gt;2)-alpha-D-Man-(1-&gt;2)-alpha-D-Man-(1-&gt;3)-[alpha-D-Man-(1-&gt;2)-alpha-D-Man-(1-&gt;3)-[alpha-D-Man-(1-&gt;2)-alpha-D-Man-(1-&gt;6)]-alpha-D-Man-(1-&gt;6)]-beta-D-Man-(1-&gt;4)-beta-D-GlcNAc-(1-&gt;4)-alpha-D-GlcNAc-diphospho-di-trans,poly-cis-dolichol + a di-trans,poly-cis-dolichyl phosphate + H(+). Its pathway is protein modification; protein glycosylation. Its function is as follows. Dolichyl pyrophosphate Glc1Man9GlcNAc2 alpha-1,3-glucosyltransferase that operates in the biosynthetic pathway of dolichol-linked oligosaccharides, the glycan precursors employed in protein asparagine (N)-glycosylation. The assembly of dolichol-linked oligosaccharides begins on the cytosolic side of the endoplasmic reticulum membrane and finishes in its lumen. The sequential addition of sugars to dolichol pyrophosphate produces dolichol-linked oligosaccharides containing fourteen sugars, including two GlcNAcs, nine mannoses and three glucoses. Once assembled, the oligosaccharide is transferred from the lipid to nascent proteins by oligosaccharyltransferases. In the lumen of the endoplasmic reticulum, adds the second glucose residue from dolichyl phosphate glucose (Dol-P-Glc) onto the lipid-linked oligosaccharide intermediate Glc(1)Man(9)GlcNAc(2)-PP-Dol to produce Glc(2)Man(9)GlcNAc(2)-PP-Dol. Glc(2)Man(9)GlcNAc(2)-PP-Dol is a substrate for ALG10, the following enzyme in the biosynthetic pathway. Required for PKD1/Polycystin-1 maturation and localization to the plasma membrane of the primary cilia. This chain is Dolichyl pyrophosphate Glc1Man9GlcNAc2 alpha-1,3-glucosyltransferase, found in Bos taurus (Bovine).